A 205-amino-acid polypeptide reads, in one-letter code: NADH-quinone oxidoreductase subunit C (205 aa).

The protein belongs to the complex I 30 kDa subunit family. NDH-1 is composed of 14 different subunits. Subunits NuoB, C, D, E, F, and G constitute the peripheral sector of the complex.

Its subcellular location is the cell inner membrane. The enzyme catalyses a quinone + NADH + 5 H(+)(in) = a quinol + NAD(+) + 4 H(+)(out). In terms of biological role, NDH-1 shuttles electrons from NADH, via FMN and iron-sulfur (Fe-S) centers, to quinones in the respiratory chain. The immediate electron acceptor for the enzyme in this species is believed to be ubiquinone. Couples the redox reaction to proton translocation (for every two electrons transferred, four hydrogen ions are translocated across the cytoplasmic membrane), and thus conserves the redox energy in a proton gradient. The polypeptide is NADH-quinone oxidoreductase subunit C (Nitrosospira multiformis (strain ATCC 25196 / NCIMB 11849 / C 71)).